Reading from the N-terminus, the 164-residue chain is Hoefavidin (164 aa).

The signal sequence occupies residues 1–22 (MNKVLAIVLTITVAGFAQTAFA). Positions 32-155 (KLLAGASNWV…GQDDFMQSVA (124 aa)) constitute an Avidin-like domain. Positions 42, 46, 68, 70, and 76 each coordinate biotin. The cysteines at positions 77 and 108 are disulfide-linked. The biotin site is built by serine 110, threonine 112, and aspartate 148.

Belongs to the avidin/streptavidin family. In terms of assembly, exhibits a dynamic oligomeric assembly: the apo form exits as homooctamers, which dissociate into homodimers upon biotin binding. The X-ray structure of the intact hoefavidin reveals unique crystal packing generated by an octameric cylindrical structure wherein the C-terminal segments of each monomer are introduced into the entrance of the biotin-binding site of an adjacent non-canonical monomer.

The protein resides in the secreted. Functionally, the exact role played by hoefavidin in the host organism is still obscure. Forms a strong non-covalent complex with biotin and 2-iminobiotin. This Hoeflea phototrophica (strain DSM 17068 / NCIMB 14078 / DFL-43) protein is Hoefavidin.